The chain runs to 769 residues: 5-methyltetrahydropteroyltriglutamate--homocysteine methyltransferase (769 aa).

5-methyltetrahydropteroyltri-L-glutamate contacts are provided by residues 16–19 (RELK) and Lys121. The segment at 415–450 (SMTERDSPHSSRSPLQREALDLPTLPTTTIGSFPQT) is disordered. A compositionally biased stretch (polar residues) spans 439-449 (LPTTTIGSFPQ). L-homocysteine is bound by residues 444 to 446 (IGS) and Glu497. L-methionine is bound by residues 444 to 446 (IGS) and Glu497. Residues 528 to 529 (RC) and Trp574 contribute to the 5-methyltetrahydropteroyltri-L-glutamate site. Asp612 is a binding site for L-homocysteine. An L-methionine-binding site is contributed by Asp612. Glu618 is a 5-methyltetrahydropteroyltri-L-glutamate binding site. 3 residues coordinate Zn(2+): His654, Cys656, and Glu678. His707 (proton donor) is an active-site residue. Residue Cys739 coordinates Zn(2+).

This sequence belongs to the vitamin-B12 independent methionine synthase family. It depends on Zn(2+) as a cofactor.

It carries out the reaction 5-methyltetrahydropteroyltri-L-glutamate + L-homocysteine = tetrahydropteroyltri-L-glutamate + L-methionine. Its pathway is amino-acid biosynthesis; L-methionine biosynthesis via de novo pathway; L-methionine from L-homocysteine (MetE route): step 1/1. Functionally, catalyzes the transfer of a methyl group from 5-methyltetrahydrofolate to homocysteine resulting in methionine formation. This Salinibacter ruber (strain DSM 13855 / M31) protein is 5-methyltetrahydropteroyltriglutamate--homocysteine methyltransferase.